The following is a 144-amino-acid chain: C-type isolectin Sp-CL4 (144 aa).

Positions 27–144 (DENRKVKYFE…CSEKLPFMCA (118 aa)) constitute a C-type lectin domain. Disulfide bonds link cysteine 48/cysteine 143 and cysteine 119/cysteine 135.

The protein belongs to the true venom lectin family. Glycosylated with a carbohydrate of 383 Da. In terms of tissue distribution, expressed by the venom gland.

Its subcellular location is the secreted. In terms of biological role, the role of this hemagglutinin in the venom is unknown, because it is masked by the high venom hemolytic activity. Lectin with specificity to galactose. Induces hemagglutination. This is C-type isolectin Sp-CL4 from Scorpaena plumieri (Spotted scorpionfish).